A 1071-amino-acid chain; its full sequence is Intracellular phospholipase A2 (1071 aa).

A disordered region spans residues 1-22; it reads MTTTNKDGPFRQQYLPGVHKEP. 7 ANK repeats span residues 411–440, 479–508, 510–539, 544–570, 578–610, 614–651, and 652–681; these read ENCY…TLFC, DGQS…KFTR, DRNE…EIAN, LGNS…ELGL, AGET…NMNA, HGNT…KINL, and RGES…TRCP. The 174-residue stretch at 748–921 folds into the PNPLA domain; the sequence is ISMDGGGIRG…ISNNPALDLM (174 aa). The short motif at 752 to 757 is the GXGXXG element; sequence GGGIRG. Residues 784 to 788 carry the GXSXG motif; it reads GTSTG. Ser-786 (nucleophile) is an active-site residue. Residue Asp-908 is the Proton acceptor of the active site. The DGA/G signature appears at 908–910; sequence DGG.

The protein belongs to the patatin family.

The enzyme catalyses a 1,2-diacyl-sn-glycero-3-phosphocholine + H2O = a 1-acyl-sn-glycero-3-phosphocholine + a fatty acid + H(+). Its function is as follows. Phospholipase that plays a critical role during oogenesis, ovulation, and/or embryogenesis. In Caenorhabditis elegans, this protein is Intracellular phospholipase A2.